A 144-amino-acid chain; its full sequence is Cytochrome c-type biogenesis protein CcmE (144 aa).

At 1 to 7 the chain is on the cytoplasmic side; sequence MKPRHKR. The chain crosses the membrane as a helical; Signal-anchor for type II membrane protein span at residues 8 to 28; the sequence is ALMIVAALAVIGIAALLILNA. Residues 29 to 144 lie on the Extracellular side of the membrane; the sequence is LNSNIALYVT…EQAQKNGSAK (116 aa). 2 residues coordinate heme: H121 and Y125.

This sequence belongs to the CcmE/CycJ family.

The protein resides in the cell membrane. Heme chaperone required for the biogenesis of c-type cytochromes. Transiently binds heme delivered by CcmC and transfers the heme to apo-cytochromes in a process facilitated by CcmF and CcmH. In Polynucleobacter asymbioticus (strain DSM 18221 / CIP 109841 / QLW-P1DMWA-1) (Polynucleobacter necessarius subsp. asymbioticus), this protein is Cytochrome c-type biogenesis protein CcmE.